Consider the following 377-residue polypeptide: Nitric oxide reductase FlRd-NAD(+) reductase (377 aa).

Belongs to the FAD-dependent oxidoreductase family. It depends on FAD as a cofactor.

It is found in the cytoplasm. It catalyses the reaction 2 reduced [nitric oxide reductase rubredoxin domain] + NAD(+) + H(+) = 2 oxidized [nitric oxide reductase rubredoxin domain] + NADH. The protein operates within nitrogen metabolism; nitric oxide reduction. In terms of biological role, one of at least two accessory proteins for anaerobic nitric oxide (NO) reductase. Reduces the rubredoxin moiety of NO reductase. The protein is Nitric oxide reductase FlRd-NAD(+) reductase of Escherichia coli O17:K52:H18 (strain UMN026 / ExPEC).